The following is a 137-amino-acid chain: MQNLLKNLATSLGRKPFVADKQGVYRLTIDKHLVMLTPHGSELVLRTPIDAPMLREGNNVNVTLLRSLMQQALAWAKRYPQTLVLDDCGQLVLEARLRLQELDTHGLQEVINKQLALLEHLIPQLTPFSVASRVGWN.

As to quaternary structure, interacts with SycN to form a complex which specifically binds to YopN.

The protein localises to the cytoplasm. The protein resides in the cell inner membrane. Functionally, functions as a specific chaperone for YopN. It could facilitate the secretion and the subsequent translocation of YopN. The polypeptide is Chaperone protein YscB (yscB) (Yersinia enterocolitica).